Consider the following 278-residue polypeptide: S-formylglutathione hydrolase YeiG (278 aa).

Active-site charge relay system residues include Ser-145, Asp-223, and His-256.

Belongs to the esterase D family.

It catalyses the reaction S-formylglutathione + H2O = formate + glutathione + H(+). Its function is as follows. Serine hydrolase involved in the detoxification of formaldehyde. Hydrolyzes S-formylglutathione to glutathione and formate. In Escherichia coli O157:H7, this protein is S-formylglutathione hydrolase YeiG (yeiG).